A 305-amino-acid polypeptide reads, in one-letter code: L-lactate dehydrogenase (305 aa).

NAD(+)-binding positions include Val-11, Asp-32, Lys-37, and 76–77; that span reads GV. Residues Gln-79, Arg-85, and 117-120 contribute to the substrate site; that span reads NPVD. NAD(+)-binding positions include 115 to 117 and Ser-140; that span reads ATN. 145-148 lines the substrate pocket; that stretch reads DTAR. Arg-150 and His-165 together coordinate beta-D-fructose 1,6-bisphosphate. His-172 acts as the Proton acceptor in catalysis. Tyr-218 bears the Phosphotyrosine mark. Thr-227 is a substrate binding site.

The protein belongs to the LDH/MDH superfamily. LDH family. Homotetramer.

The protein localises to the cytoplasm. It catalyses the reaction (S)-lactate + NAD(+) = pyruvate + NADH + H(+). It participates in fermentation; pyruvate fermentation to lactate; (S)-lactate from pyruvate: step 1/1. Its activity is regulated as follows. Allosterically activated by fructose 1,6-bisphosphate (FBP). Catalyzes the conversion of lactate to pyruvate. The polypeptide is L-lactate dehydrogenase (Chloroherpeton thalassium (strain ATCC 35110 / GB-78)).